Consider the following 57-residue polypeptide: Large ribosomal subunit protein bL32 (57 aa).

Residues M1–Q19 are compositionally biased toward basic residues. A disordered region spans residues M1 to K21.

The protein belongs to the bacterial ribosomal protein bL32 family.

This is Large ribosomal subunit protein bL32 from Mycobacteroides abscessus (strain ATCC 19977 / DSM 44196 / CCUG 20993 / CIP 104536 / JCM 13569 / NCTC 13031 / TMC 1543 / L948) (Mycobacterium abscessus).